A 662-amino-acid chain; its full sequence is Histidine decarboxylase (662 aa).

The substrate site is built by tyrosine 81 and histidine 194. Lysine 305 is modified (N6-(pyridoxal phosphate)lysine).

Belongs to the group II decarboxylase family. As to quaternary structure, homodimer. It depends on pyridoxal 5'-phosphate as a cofactor.

It catalyses the reaction L-histidine + H(+) = histamine + CO2. It functions in the pathway amine and polyamine biosynthesis; histamine biosynthesis; histamine from L-histidine: step 1/1. Its function is as follows. Catalyzes the biosynthesis of histamine from histidine. This chain is Histidine decarboxylase (HDC), found in Homo sapiens (Human).